Reading from the N-terminus, the 95-residue chain is Co-chaperonin GroES (95 aa).

This sequence belongs to the GroES chaperonin family. As to quaternary structure, heptamer of 7 subunits arranged in a ring. Interacts with the chaperonin GroEL.

It localises to the cytoplasm. Functionally, together with the chaperonin GroEL, plays an essential role in assisting protein folding. The GroEL-GroES system forms a nano-cage that allows encapsulation of the non-native substrate proteins and provides a physical environment optimized to promote and accelerate protein folding. GroES binds to the apical surface of the GroEL ring, thereby capping the opening of the GroEL channel. The polypeptide is Co-chaperonin GroES (Nitratidesulfovibrio vulgaris (strain ATCC 29579 / DSM 644 / CCUG 34227 / NCIMB 8303 / VKM B-1760 / Hildenborough) (Desulfovibrio vulgaris)).